The primary structure comprises 547 residues: ATP synthase subunit alpha (547 aa).

172–179 (GDRKTGKT) lines the ATP pocket.

Belongs to the ATPase alpha/beta chains family. As to quaternary structure, F-type ATPases have 2 components, CF(1) - the catalytic core - and CF(0) - the membrane proton channel. CF(1) has five subunits: alpha(3), beta(3), gamma(1), delta(1), epsilon(1). CF(0) has three main subunits: a(1), b(2) and c(9-12). The alpha and beta chains form an alternating ring which encloses part of the gamma chain. CF(1) is attached to CF(0) by a central stalk formed by the gamma and epsilon chains, while a peripheral stalk is formed by the delta and b chains.

It localises to the cell membrane. It carries out the reaction ATP + H2O + 4 H(+)(in) = ADP + phosphate + 5 H(+)(out). Its function is as follows. Produces ATP from ADP in the presence of a proton gradient across the membrane. The alpha chain is a regulatory subunit. This Rhodococcus jostii (strain RHA1) protein is ATP synthase subunit alpha.